The following is a 452-amino-acid chain: MAAPSAGSWSTFQHKELMAADRGRRILGVCGMHPHHQETLKKNRVVLAKQLLLSELLEHLLEKDIITLEMRELIQAKVGSFSQNVELLNLLPKRGPQAFDAFCEALRETKQGHLEDMLLTTLSGLQHVLPPLSCDYDLSLPFPVCESCPLYKKLRLSTDTVEHSLDNKDGPVCLQVKPCTPEFYQTHFQLAYRLQSRPRGLALVLSNVHFTGEKELEFRSGGDVDHSTLVTLFKLLGYDVHVLCDQTAQEMQEKLQNFAQLPAHRVTDSCIVALLSHGVEGAIYGVDGKLLQLQEVFQLFDNANCPSLQNKPKMFFIQACRGDETDRGVDQQDGKNHAGSPGCEESDAGKEKLPKMRLPTRSDMICGYACLKGTAAMRNTKRGSWYIEALAQVFSERACDMHVADMLVKVNALIKDREGYAPGTEFHRCKEMSEYCSTLCRHLYLFPGHPPT.

Position 2 is an N-acetylalanine (Ala-2). Residues 2-169 (AAPSAGSWST…TVEHSLDNKD (168 aa)) constitute a propeptide that is removed on maturation. Residues 32-121 (MHPHHQETLK…GHLEDMLLTT (90 aa)) form the CARD domain. Phosphoserine is present on Ser-157. Residues His-277 and Cys-320 contribute to the active site. A propeptide spanning residues 326 to 333 (DRGVDQQD) is cleaved from the precursor. Positions 327 to 336 (RGVDQQDGKN) are enriched in basic and acidic residues. The segment at 327–354 (RGVDQQDGKNHAGSPGCEESDAGKEKLP) is disordered. Ser-340 carries the phosphoserine modification.

The protein belongs to the peptidase C14A family. Heterotetramer that consists of two anti-parallel arranged heterodimers, each one formed by a p18 subunit and a p12 subunit. Forms a complex named the PIDDosome with PIDD1 and CRADD. Interacts with NOL3 (via CARD domain); inhibits CASP2 activity in a phosphorylation-dependent manner. In terms of processing, the mature protease can process its own propeptide, but not that of other caspases. As to expression, expressed at higher levels in the embryonic lung, liver and kidney than in the heart and brain. In adults, higher level expression is seen in the placenta, lung, kidney, and pancreas than in the heart, brain, liver and skeletal muscle.

It catalyses the reaction Strict requirement for an Asp residue at P1, with 316-Asp being essential for proteolytic activity and has a preferred cleavage sequence of Val-Asp-Val-Ala-Asp-|-.. Is a regulator of the cascade of caspases responsible for apoptosis execution. Might function by either activating some proteins required for cell death or inactivating proteins necessary for cell survival. Associates with PIDD1 and CRADD to form the PIDDosome, a complex that activates CASP2 and triggers apoptosis in response to genotoxic stress. Its function is as follows. Acts as a positive regulator of apoptosis. Functionally, acts as a negative regulator of apoptosis. In terms of biological role, may function as an endogenous apoptosis inhibitor that antagonizes caspase activation and cell death. This is Caspase-2 (CASP2) from Homo sapiens (Human).